Reading from the N-terminus, the 363-residue chain is G kinase-anchoring protein 1-B (363 aa).

2 disordered regions span residues 17 to 79 (ALLK…RNLA) and 147 to 182 (VNGD…VPLK). Residues 50-79 (KTNVNEKKKEKRRKKKEQQQSEANELRNLA) adopt a coiled-coil conformation. Basic residues predominate over residues 160–170 (KVNKKDKRKNN). Coiled coils occupy residues 249–298 (DGKT…QEGE) and 328–348 (AALE…VRYQ).

It belongs to the GKAP1 family.

Its subcellular location is the golgi apparatus. May play a role in the regulation of insulin-dependent IRS1 tyrosine phosphorylation in adipocytes. The chain is G kinase-anchoring protein 1-B (gkap1-b) from Xenopus laevis (African clawed frog).